The chain runs to 248 residues: Triosephosphate isomerase (248 aa).

Substrate-binding residues include Asn-12 and Lys-14. An N6-acetyllysine modification is found at Lys-14. The residue at position 68 (Tyr-68) is a 3'-nitrotyrosine. Residue His-96 is the Electrophile of the active site. Position 106 is a phosphoserine (Ser-106). Lys-142 participates in a covalent cross-link: Glycyl lysine isopeptide (Lys-Gly) (interchain with G-Cter in SUMO1). Lys-149 bears the N6-succinyllysine mark. At Lys-156 the chain carries N6-acetyllysine; alternate. Lys-156 is subject to N6-succinyllysine; alternate. Glu-166 functions as the Proton acceptor in the catalytic mechanism. Thr-173 carries the post-translational modification Phosphothreonine. N6-acetyllysine; alternate is present on Lys-194. N6-succinyllysine; alternate is present on Lys-194. Position 194 is an N6-methyllysine; alternate (Lys-194). 3'-nitrotyrosine is present on Tyr-209. Position 212 is a phosphoserine (Ser-212). A Phosphothreonine modification is found at Thr-214. At Ser-223 the chain carries Phosphoserine. Lys-238 carries the post-translational modification N6-acetyllysine.

Belongs to the triosephosphate isomerase family. In terms of assembly, homodimer.

The protein resides in the cytoplasm. It catalyses the reaction dihydroxyacetone phosphate = methylglyoxal + phosphate. The catalysed reaction is D-glyceraldehyde 3-phosphate = dihydroxyacetone phosphate. It functions in the pathway carbohydrate degradation; glycolysis; D-glyceraldehyde 3-phosphate from glycerone phosphate: step 1/1. The protein operates within carbohydrate biosynthesis; gluconeogenesis. Its function is as follows. Triosephosphate isomerase is an extremely efficient metabolic enzyme that catalyzes the interconversion between dihydroxyacetone phosphate (DHAP) and D-glyceraldehyde-3-phosphate (G3P) in glycolysis and gluconeogenesis. In terms of biological role, it is also responsible for the non-negligible production of methylglyoxal a reactive cytotoxic side-product that modifies and can alter proteins, DNA and lipids. The protein is Triosephosphate isomerase (TPI1) of Sus scrofa (Pig).